We begin with the raw amino-acid sequence, 200 residues long: Recombination protein RecR (200 aa).

The C4-type zinc finger occupies 59 to 74 (CDICGNVCESSPCPVC). One can recognise a Toprim domain in the interval 82–177 (SVICVVEEPK…KVTRLASGLP (96 aa)).

This sequence belongs to the RecR family.

In terms of biological role, may play a role in DNA repair. It seems to be involved in an RecBC-independent recombinational process of DNA repair. It may act with RecF and RecO. The chain is Recombination protein RecR from Bifidobacterium longum subsp. infantis (strain ATCC 15697 / DSM 20088 / JCM 1222 / NCTC 11817 / S12).